The chain runs to 241 residues: Biosynthetic peptidoglycan transglycosylase (241 aa).

The helical transmembrane segment at 18-38 (GVIGIIALWMAGILIFAFLPV) threads the bilayer.

It belongs to the glycosyltransferase 51 family.

It localises to the cell inner membrane. The catalysed reaction is [GlcNAc-(1-&gt;4)-Mur2Ac(oyl-L-Ala-gamma-D-Glu-L-Lys-D-Ala-D-Ala)](n)-di-trans,octa-cis-undecaprenyl diphosphate + beta-D-GlcNAc-(1-&gt;4)-Mur2Ac(oyl-L-Ala-gamma-D-Glu-L-Lys-D-Ala-D-Ala)-di-trans,octa-cis-undecaprenyl diphosphate = [GlcNAc-(1-&gt;4)-Mur2Ac(oyl-L-Ala-gamma-D-Glu-L-Lys-D-Ala-D-Ala)](n+1)-di-trans,octa-cis-undecaprenyl diphosphate + di-trans,octa-cis-undecaprenyl diphosphate + H(+). Its pathway is cell wall biogenesis; peptidoglycan biosynthesis. Peptidoglycan polymerase that catalyzes glycan chain elongation from lipid-linked precursors. The sequence is that of Biosynthetic peptidoglycan transglycosylase from Yersinia pseudotuberculosis serotype O:3 (strain YPIII).